The chain runs to 429 residues: GTPase Obg (429 aa).

The region spanning 1-158 is the Obg domain; it reads MFVDHVKIYV…LNVILELKVL (158 aa). The segment at 119–143 is disordered; the sequence is AGRGGRGNSRFATPANPAPELSEKG. The OBG-type G domain occupies 159 to 329; it reads ADVGLVGFPS…LLFAIADLLE (171 aa). GTP-binding positions include 165–172, 190–194, 212–215, 282–285, and 310–312; these read GFPSVGKS, FTTIV, DLPG, NKMD, and SAV. 2 residues coordinate Mg(2+): Ser172 and Thr192. The OCT domain occupies 351 to 429; sequence KHEAKGEDFE…LQEFEFEFVD (79 aa).

This sequence belongs to the TRAFAC class OBG-HflX-like GTPase superfamily. OBG GTPase family. In terms of assembly, monomer. Mg(2+) serves as cofactor.

Its subcellular location is the cytoplasm. In terms of biological role, an essential GTPase which binds GTP, GDP and possibly (p)ppGpp with moderate affinity, with high nucleotide exchange rates and a fairly low GTP hydrolysis rate. Plays a role in control of the cell cycle, stress response, ribosome biogenesis and in those bacteria that undergo differentiation, in morphogenesis control. The chain is GTPase Obg from Lysinibacillus sphaericus (strain C3-41).